Here is a 189-residue protein sequence, read N- to C-terminus: Thymidine kinase (189 aa).

ATP is bound by residues 9 to 16 and 85 to 88; these read GTMNSGKT and DESQ. Residue Glu86 is the Proton acceptor of the active site. Zn(2+)-binding residues include Cys143, Cys146, Cys180, and His183.

It belongs to the thymidine kinase family. In terms of assembly, homotetramer.

The protein resides in the cytoplasm. The enzyme catalyses thymidine + ATP = dTMP + ADP + H(+). The protein is Thymidine kinase of Streptococcus pyogenes serotype M1.